A 536-amino-acid chain; its full sequence is Xylulose kinase (536 aa).

Positions 99, 170, 280, and 281 each coordinate substrate. Residues Trp-355, 441–442, and Asn-445 each bind ATP; that span reads GA.

The protein belongs to the FGGY kinase family. Monomer.

The catalysed reaction is D-xylulose + ATP = D-xylulose 5-phosphate + ADP + H(+). In terms of biological role, phosphorylates D-xylulose to produce D-xylulose 5-phosphate, a molecule that may play an important role in the regulation of glucose metabolism and lipogenesis. The sequence is that of Xylulose kinase (Xylb) from Rattus norvegicus (Rat).